A 1091-amino-acid chain; its full sequence is MSEGTVKENNNEEFNAYHTLTTEEAAEFIGTSLTEGLTQDESLRRLKAVGENTLGDDTKIDYKAMVLHQVCNAMIMVLVISMAISFAVRDWITGGVISFVIAVNVLIGLVQEYKATKTMNSLKNLSSPNAHVIRNGKSETINSKDVVPGDICLVKVGDTIPADLRLIETKNFDTDESLLTGESLPVSKDANLVFGKEEETSVGDRLNLAFSSSAVVKGRAKGIVIKTALNSEIGKIAKSLQGDSGLISRDPSKSWLQNTWISTKKVTGAFLGTNVGTPLHRKLSKLAVLLFWIAVLFAIIVMASQKFDVDKRVAIYAICVALSMIPSSLVVVLTITMSVGAAVMVSRNVIVRKLDSLEALGAVNDICSDKTGTLTQGKMLARQIWIPRFGTITISNSDDPFNPNEGNVSLIPRFSPYEYSHNEDGDVGILQNFKDRLYEKDLPEDIDMDLFQKWLETATLANIATVFKDDATDCWKAHGDPTEIAIQVFATKMDLPHNALTGEKSTNQSNENDQSSLSQHNEKPGSAQFEHIAEFPFDSTVKRMSSVYYNNHNETYNIYGKGAFESIISCCSSWYGKDGVKITPLTDCDVETIRKNVYSLSNEGLRVLGFASKSFTKDQVNDDQLKNITSNRATAESDLVFLGLIGIYDPPRNETAGAVKKFHQAGINVHMLTGDFVGTAKAIAQEVGILPTNLYHYSQEIVDSMVMTGSQFDGLSEEEVDDLPVLPLVIARCSPQTKVRMIEALHRRKKFCAMTGDGVNDSPSLKMANVGIAMGINGSDVSKEASDIVLSDDNFASILNAVEEGRRMTDNIQKFVLQLLAENVAQALYLIIGLVFRDENGKSVFPLSPVEVLWIIVVTSCFPAMGLGLEKAAPDLMDRPPNDSEVGIFTWEVIIDTFAYGIIMTGSCMASFTGSLYGINSGRLGHDCDGTYNSSCRDVYRSRSAAFATMTWCALILAWEVVDMRRSFFRMHPDTDSPVKEFFRSIWGNQFLFWSIIFGFVSAFPVVYIPVINDKVFLHKPIGAEWGLAIAFTIAFWIGAELYKCGKRRYFKTQRAHNSENDLERSSKHDPFEAYSTSTTLQSEINISVKH.

Residues 1 to 63 (MSEGTVKENN…LGDDTKIDYK (63 aa)) are Cytoplasmic-facing. The helical transmembrane segment at 64–84 (AMVLHQVCNAMIMVLVISMAI) threads the bilayer. At 85–90 (SFAVRD) the chain is on the extracellular side. Residues 91-111 (WITGGVISFVIAVNVLIGLVQ) form a helical membrane-spanning segment. Over 112–282 (EYKATKTMNS…TNVGTPLHRK (171 aa)) the chain is Cytoplasmic. The helical transmembrane segment at 283-303 (LSKLAVLLFWIAVLFAIIVMA) threads the bilayer. The Extracellular segment spans residues 304–312 (SQKFDVDKR). Residues 313 to 333 (VAIYAICVALSMIPSSLVVVL) traverse the membrane as a helical segment. The Cytoplasmic portion of the chain corresponds to 334 to 815 (TITMSVGAAV…RRMTDNIQKF (482 aa)). The active-site 4-aspartylphosphate intermediate is the Asp369. Mg(2+) is bound by residues Asp369 and Thr371. ATP-binding residues include Thr371 and Glu483. The tract at residues 499–525 (ALTGEKSTNQSNENDQSSLSQHNEKPG) is disordered. A compositionally biased stretch (polar residues) spans 503-519 (EKSTNQSNENDQSSLSQ). Positions 561, 606, 673, 674, 675, 732, and 738 each coordinate ATP. A Mg(2+)-binding site is contributed by Asp757. Residue Asn760 coordinates ATP. The chain crosses the membrane as a helical span at residues 816 to 836 (VLQLLAENVAQALYLIIGLVF). Topologically, residues 837 to 848 (RDENGKSVFPLS) are extracellular. Residues 849–869 (PVEVLWIIVVTSCFPAMGLGL) form a helical membrane-spanning segment. The Cytoplasmic segment spans residues 870 to 885 (EKAAPDLMDRPPNDSE). A helical transmembrane segment spans residues 886 to 906 (VGIFTWEVIIDTFAYGIIMTG). The Extracellular segment spans residues 907-943 (SCMASFTGSLYGINSGRLGHDCDGTYNSSCRDVYRSR). The chain crosses the membrane as a helical span at residues 944-964 (SAAFATMTWCALILAWEVVDM). The Cytoplasmic portion of the chain corresponds to 965–991 (RRSFFRMHPDTDSPVKEFFRSIWGNQF). A helical membrane pass occupies residues 992-1012 (LFWSIIFGFVSAFPVVYIPVI). The Extracellular segment spans residues 1013–1021 (NDKVFLHKP). Residues 1022-1042 (IGAEWGLAIAFTIAFWIGAEL) form a helical membrane-spanning segment. Topologically, residues 1043 to 1091 (YKCGKRRYFKTQRAHNSENDLERSSKHDPFEAYSTSTTLQSEINISVKH) are cytoplasmic.

The protein belongs to the cation transport ATPase (P-type) (TC 3.A.3) family. Type IID subfamily. Mg(2+) serves as cofactor. Post-translationally, the active site is phosphorylated in presence of sodium or potassium and in conditions of higher pH. Not phosphorylated in presence of calcium ions.

It is found in the cell membrane. The enzyme catalyses Na(+)(in) + ATP + H2O = Na(+)(out) + ADP + phosphate + H(+). The catalysed reaction is K(+)(in) + ATP + H2O = K(+)(out) + ADP + phosphate + H(+). In terms of biological role, catalyzes the hydrolysis of ATP coupled with the export of sodium and potassium from the cell. May export potassium less efficiently. May transport other cations such as lithium. Sodium/potassium efflux ATPases are involved in salt tolerance and maintaining the membrane potential across the plasma membrane in high salinity (Na+) or alkaline (K+) environments. This chain is Sodium/potassium exporting P-type ATPase 5, found in Saccharomyces cerevisiae (strain ATCC 204508 / S288c) (Baker's yeast).